The following is a 149-amino-acid chain: Nucleoside diphosphate kinase 1 (149 aa).

Residues Lys-9, Phe-57, Arg-85, Thr-91, Arg-102, and Asn-112 each contribute to the ATP site. Catalysis depends on His-115, which acts as the Pros-phosphohistidine intermediate.

This sequence belongs to the NDK family. The cofactor is Mg(2+). Post-translationally, autophosphorylated.

It catalyses the reaction a 2'-deoxyribonucleoside 5'-diphosphate + ATP = a 2'-deoxyribonucleoside 5'-triphosphate + ADP. It carries out the reaction a ribonucleoside 5'-diphosphate + ATP = a ribonucleoside 5'-triphosphate + ADP. In terms of biological role, major role in the synthesis of nucleoside triphosphates other than ATP. The ATP gamma phosphate is transferred to the NDP beta phosphate via a ping-pong mechanism, using a phosphorylated active-site intermediate. Also exhibits a kinase-like activity towards histone H1. This chain is Nucleoside diphosphate kinase 1 (NDPK1), found in Saccharum officinarum (Sugarcane).